Here is a 460-residue protein sequence, read N- to C-terminus: Ammonium transporter Rh type B-A (460 aa).

At 1–10 (MTGYSTNMRI) the chain is on the cytoplasmic side. The helical transmembrane segment at 11–31 (KLPLFCLILQFITIILFAVFV) threads the bilayer. The Extracellular portion of the chain corresponds to 32–62 (RYDHESDARGWHDELKNHSTANADNDFYFRY). A glycan (N-linked (GlcNAc...) asparagine) is linked at Asn48. A helical transmembrane segment spans residues 63-83 (PSFQDVHVMIFIGFGFLMTFL). Topologically, residues 84–87 (KRYG) are cytoplasmic. Residues 88–108 (FSSVAFNFLIAAFGLQWSTLI) form a helical membrane-spanning segment. Residues 109 to 125 (QGFFHGFHDGKIHVGIE) are Extracellular-facing. The chain crosses the membrane as a helical span at residues 126–146 (SMINADFCTGAVLISFGAVLG). Topologically, residues 147 to 150 (KTSP) are cytoplasmic. Residues 151–171 (VQLIVMTLIEVTLFGINEYII) form a helical membrane-spanning segment. The Extracellular segment spans residues 172 to 179 (LNIVGAKD). The chain crosses the membrane as a helical span at residues 180–202 (AGGSMTIHTFGAYFGLIVSRVLY). Residues 203–220 (RADLDKSRQREGSVYHSD) are Cytoplasmic-facing. A helical transmembrane segment spans residues 221–241 (LFAMIGTIYLWMFWPSFNSAV). Topologically, residues 242 to 252 (TAHGDDQHRTV) are extracellular. Residues 253–273 (LNTYYSLAACTLATFGFSALL) form a helical membrane-spanning segment. At 274-283 (NGEGKLDMVH) the chain is on the cytoplasmic side. A helical transmembrane segment spans residues 284–304 (IQNAALAGGVAVGTSGEMMLT). A topological domain (extracellular) is located at residue Pro305. Residues 306-326 (FGAMIAGTLAGIVSVLGYKYL) form a helical membrane-spanning segment. Residues 327–347 (TPVLDSKLKIQDTCGVHNLHG) are Cytoplasmic-facing. A helical membrane pass occupies residues 348 to 368 (MPGILGAVIGAIVALFATADI). Residues 369 to 394 (YGDGMDDVFPMIFDGSRTAKQQSLYQ) are Extracellular-facing. Residues 395–415 (FLALLVALGFAIVGGTVVGFI) traverse the membrane as a helical segment. The Cytoplasmic portion of the chain corresponds to 416-460 (LKLPLFGTPSDAECFEDAVYWEVPGGEGHQQLTVVVNNEDPDTQA).

This sequence belongs to the ammonium transporter (TC 2.A.49) family. Rh subfamily.

The protein localises to the basolateral cell membrane. It localises to the cytoplasmic vesicle membrane. In terms of biological role, functions as a specific ammonium transporter. The sequence is that of Ammonium transporter Rh type B-A (rhbg-a) from Xenopus laevis (African clawed frog).